The chain runs to 327 residues: Phenylalanine--tRNA ligase alpha subunit (327 aa).

Glutamate 252 provides a ligand contact to Mg(2+).

Belongs to the class-II aminoacyl-tRNA synthetase family. Phe-tRNA synthetase alpha subunit type 1 subfamily. Tetramer of two alpha and two beta subunits. The cofactor is Mg(2+).

Its subcellular location is the cytoplasm. It catalyses the reaction tRNA(Phe) + L-phenylalanine + ATP = L-phenylalanyl-tRNA(Phe) + AMP + diphosphate + H(+). The chain is Phenylalanine--tRNA ligase alpha subunit from Pectobacterium atrosepticum (strain SCRI 1043 / ATCC BAA-672) (Erwinia carotovora subsp. atroseptica).